The sequence spans 111 residues: uncharacterized protein (111 aa).

This sequence belongs to the asfivirus E111R family.

This is an uncharacterized protein from African swine fever virus (isolate Pig/Kenya/KEN-50/1950) (ASFV).